A 186-amino-acid polypeptide reads, in one-letter code: Der GTPase-activating protein YihI (186 aa).

Positions 42–77 are disordered; the sequence is KAREDKKKRKHKGLASGSRHSAVEEKANKLQNEIKD. Over residues 62–77 the composition is skewed to basic and acidic residues; it reads SAVEEKANKLQNEIKD.

This sequence belongs to the YihI family. In terms of assembly, interacts with Der.

Functionally, a GTPase-activating protein (GAP) that modifies Der/EngA GTPase function. May play a role in ribosome biogenesis. The polypeptide is Der GTPase-activating protein YihI (Haemophilus influenzae (strain ATCC 51907 / DSM 11121 / KW20 / Rd)).